A 175-amino-acid chain; its full sequence is Co-chaperone protein daf-41 (175 aa).

The region spanning 2–89 (AKQPTVLWAQ…KTPAWWPRLL (88 aa)) is the CS domain. The interval 109 to 175 (DEDDEAEDAG…EEEGKNGTRA (67 aa)) is disordered. A compositionally biased stretch (acidic residues) spans 148-168 (GLEDDEEDDDMPDLEDNEEEE).

Belongs to the p23/wos2 family. In terms of tissue distribution, expressed in anterior and posterior neurons including ASE, AWC, ASI and ADL amphids and phasmid sensory neurons, peripheral neurons and ventral cord motorneurons. Additionally expressed in body wall muscle, pharynx, vulva, germ cells and intestine.

Co-chaperone for hsp90/daf-21. Involved in regulation of longevity, larval entry and exit from the dauer stage of development and response to environmental cues, such as oxidative stress, in a temperature-dependent manner. Role in daf-16 and hsf-1 inhibition at elevated temperatures. The protein is Co-chaperone protein daf-41 of Caenorhabditis elegans.